Here is a 119-residue protein sequence, read N- to C-terminus: Large ribosomal subunit protein bL20 (119 aa).

It belongs to the bacterial ribosomal protein bL20 family.

Functionally, binds directly to 23S ribosomal RNA and is necessary for the in vitro assembly process of the 50S ribosomal subunit. It is not involved in the protein synthesizing functions of that subunit. The polypeptide is Large ribosomal subunit protein bL20 (Listeria innocua serovar 6a (strain ATCC BAA-680 / CLIP 11262)).